We begin with the raw amino-acid sequence, 641 residues long: MLV-related proviral Env polyprotein (641 aa).

The first 32 residues, 1–32, serve as a signal peptide directing secretion; sequence MEGPAFSKPLKDKINPWGPLIVLGILIRAGVS. At 33–581 the chain is on the extracellular side; that stretch reads VQHDSPHQVF…FNRSPWFTTL (549 aa). N-linked (GlcNAc...) asparagine glycans are attached at residues asparagine 43 and asparagine 58. Cystine bridges form between cysteine 109-cysteine 126 and cysteine 118-cysteine 131. The tract at residues 256 to 281 is disordered; sequence RPPQPPPPGAASIVPETAPPSQQPGT. N-linked (GlcNAc...) asparagine glycosylation occurs at asparagine 297. 6 disulfide bridges follow: cysteine 307-cysteine 310, cysteine 307-cysteine 534, cysteine 337-cysteine 391, cysteine 356-cysteine 368, cysteine 398-cysteine 411, and cysteine 526-cysteine 533. A CXXC motif is present at residues 307–310; that stretch reads CWLC. A glycan (N-linked (GlcNAc...) asparagine) is linked at asparagine 336. A glycan (N-linked (GlcNAc...) asparagine) is linked at asparagine 369. The segment at 443–463 is fusion peptide; sequence VSLTLALLLGGLTMGGIAAGV. Coiled coils occupy residues 471–520 and 530–566; these read VATK…LLFL and KEEC…SGQG. The immunosuppression stretch occupies residues 509–525; sequence LQNRRGLDLLFLKEGGL. The short motif at 526 to 534 is the CX6CC element; that stretch reads CAALKEECC. A helical transmembrane segment spans residues 582 to 602; it reads ISTIMGPLIILLLILLFGPCI. The S-palmitoyl cysteine moiety is linked to residue cysteine 601. Over 603–641 the chain is Cytoplasmic; it reads LNRLVQFVKDRISVVQALVLTQQYHQLKSIDPEEVESRE. Residues 626 to 629 carry the YXXL motif; contains endocytosis signal motif; that stretch reads YHQL.

In terms of assembly, the mature envelope protein (Env) consists of a trimer of SU-TM heterodimers attached by a labile interchain disulfide bond. In terms of processing, specific enzymatic cleavages in vivo yield mature proteins. Envelope glycoproteins are synthesized as an inactive precursor that is N-glycosylated and processed likely by host cell furin or by a furin-like protease in the Golgi to yield the mature SU and TM proteins. The cleavage site between SU and TM requires the minimal sequence [KR]-X-[KR]-R. The R-peptide is released from the C-terminus of the cytoplasmic tail of the TM protein upon particle formation as a result of proteolytic cleavage by the viral protease. Cleavage of this peptide is required for TM to become fusogenic. The CXXC motif is highly conserved across a broad range of retroviral envelope proteins. It is thought to participate in the formation of a labile disulfide bond possibly with the CX6CC motif present in the transmembrane protein. Isomerization of the intersubunit disulfide bond to an SU intrachain disulfide bond is thought to occur upon receptor recognition in order to allow membrane fusion. Post-translationally, the transmembrane protein is palmitoylated. In terms of processing, the R-peptide is palmitoylated.

The protein localises to the virion membrane. It is found in the cell membrane. Its function is as follows. The surface protein (SU) attaches the virus to the host cell by binding to its receptor. This interaction triggers the refolding of the transmembrane protein (TM) and is thought to activate its fusogenic potential by unmasking its fusion peptide. Fusion occurs at the host cell plasma membrane. In terms of biological role, the transmembrane protein (TM) acts as a class I viral fusion protein. Under the current model, the protein has at least 3 conformational states: pre-fusion native state, pre-hairpin intermediate state, and post-fusion hairpin state. During viral and target cell membrane fusion, the coiled coil regions (heptad repeats) assume a trimer-of-hairpins structure, positioning the fusion peptide in close proximity to the C-terminal region of the ectodomain. The formation of this structure appears to drive apposition and subsequent fusion of viral and target cell membranes. Membranes fusion leads to delivery of the nucleocapsid into the cytoplasm. The chain is MLV-related proviral Env polyprotein from Mus musculus (Mouse).